A 105-amino-acid chain; its full sequence is Fungal protease inhibitor-1 (105 aa).

A signal peptide spans 1–19; the sequence is MKAVITLLFLACILVVTYG. Disulfide bonds link Cys-23–Cys-56, Cys-28–Cys-58, Cys-33–Cys-59, Cys-42–Cys-62, Cys-72–Cys-93, and Cys-87–Cys-98.

Functionally, inhibits proteases from the fungi A.oryzae and R.oryzae, trypsin and chymotrypsin. Does not inhibit protease from the bacterium B.licheniformis or papain. This chain is Fungal protease inhibitor-1, found in Antheraea mylitta (Tasar silkworm).